Consider the following 498-residue polypeptide: ATP synthase subunit beta, chloroplastic (498 aa).

T6 is modified (phosphothreonine). S13 is modified (phosphoserine). Residue 172-179 (GGAGVGKT) participates in ATP binding.

The protein belongs to the ATPase alpha/beta chains family. As to quaternary structure, F-type ATPases have 2 components, CF(1) - the catalytic core - and CF(0) - the membrane proton channel. CF(1) has five subunits: alpha(3), beta(3), gamma(1), delta(1), epsilon(1). CF(0) has four main subunits: a(1), b(1), b'(1) and c(9-12).

It localises to the plastid. It is found in the chloroplast thylakoid membrane. It catalyses the reaction ATP + H2O + 4 H(+)(in) = ADP + phosphate + 5 H(+)(out). Produces ATP from ADP in the presence of a proton gradient across the membrane. The catalytic sites are hosted primarily by the beta subunits. The protein is ATP synthase subunit beta, chloroplastic of Capsella bursa-pastoris (Shepherd's purse).